The sequence spans 443 residues: Methyl-coenzyme M reductase subunit beta (443 aa).

A coenzyme M-binding site is contributed by tyrosine 367. Glycine 369 contacts coenzyme B.

The protein belongs to the methyl-coenzyme M reductase beta subunit family. As to quaternary structure, MCR is a hexamer of two alpha, two beta, and two gamma chains, forming a dimer of heterotrimers. Coenzyme F430 serves as cofactor.

It is found in the cytoplasm. It carries out the reaction coenzyme B + methyl-coenzyme M = methane + coenzyme M-coenzyme B heterodisulfide. It functions in the pathway one-carbon metabolism; methyl-coenzyme M reduction; methane from methyl-coenzyme M: step 1/1. Functionally, component of the methyl-coenzyme M reductase (MCR) I that catalyzes the reductive cleavage of methyl-coenzyme M (CoM-S-CH3 or 2-(methylthio)ethanesulfonate) using coenzyme B (CoB or 7-mercaptoheptanoylthreonine phosphate) as reductant which results in the production of methane and the mixed heterodisulfide of CoB and CoM (CoM-S-S-CoB). This is the final step in methanogenesis. The sequence is that of Methyl-coenzyme M reductase subunit beta (mcrB) from Methanococcus voltae.